The sequence spans 160 residues: Small ribosomal subunit protein uS7 (160 aa).

It belongs to the universal ribosomal protein uS7 family. As to quaternary structure, part of the 30S ribosomal subunit. Contacts proteins S9 and S11.

Its function is as follows. One of the primary rRNA binding proteins, it binds directly to 16S rRNA where it nucleates assembly of the head domain of the 30S subunit. Is located at the subunit interface close to the decoding center, probably blocks exit of the E-site tRNA. In Rickettsia rickettsii (strain Iowa), this protein is Small ribosomal subunit protein uS7.